The chain runs to 276 residues: Phosphatidylglycerol--prolipoprotein diacylglyceryl transferase (276 aa).

Helical transmembrane passes span 17–37 (LAIHWYGLTYLAAFGLFFFLA), 63–83 (ILFLGVMGVVIGGRLGYCLFY), and 95–115 (ILAVWQGGMSFHGGMLGVLAS). R146 is an a 1,2-diacyl-sn-glycero-3-phospho-(1'-sn-glycerol) binding site. Transmembrane regions (helical) follow at residues 182–202 (SQVYQFLLEGLLLFVLLWLYA), 209–229 (GQVSGAFLVGYGVFRFIAEYF), and 235–255 (FLGILALGLSMGQWLCVPMIV).

This sequence belongs to the Lgt family.

The protein localises to the cell inner membrane. It carries out the reaction L-cysteinyl-[prolipoprotein] + a 1,2-diacyl-sn-glycero-3-phospho-(1'-sn-glycerol) = an S-1,2-diacyl-sn-glyceryl-L-cysteinyl-[prolipoprotein] + sn-glycerol 1-phosphate + H(+). It functions in the pathway protein modification; lipoprotein biosynthesis (diacylglyceryl transfer). In terms of biological role, catalyzes the transfer of the diacylglyceryl group from phosphatidylglycerol to the sulfhydryl group of the N-terminal cysteine of a prolipoprotein, the first step in the formation of mature lipoproteins. In Polaromonas sp. (strain JS666 / ATCC BAA-500), this protein is Phosphatidylglycerol--prolipoprotein diacylglyceryl transferase.